Reading from the N-terminus, the 35-residue chain is Entry-fusion complex protein OPG076 (35 aa).

A helical transmembrane segment spans residues 2 to 22 (LVVIMFFIAFAFCSWLSYSYL). Over 23–35 (RPYISTKELNKSR) the chain is Virion surface.

Belongs to the orthopoxvirus OPG076 family. As to quaternary structure, component of the entry fusion complex (EFC) composed of OPG053, OPG076, OPG086, OPG094, OPG095, OPG099, OPG107, OPG143, OPG104, OPG147 and OPG155. Except for OPG095 and OPG053, each of the EFC proteins is required for assembly or stability of the complex. Unglycosylated because produced in viral factories instead of the classic ER -Golgi route.

The protein resides in the virion membrane. Functionally, component of the entry fusion complex (EFC), which consists of 11 proteins. During cell infection, this complex mediates entry of the virion core into the host cytoplasm by a two-step mechanism consisting of lipid mixing of the viral and cellular membranes and subsequent pore formation. The protein is Entry-fusion complex protein OPG076 (OPG076) of Vaccinia virus (strain Copenhagen) (VACV).